The primary structure comprises 351 residues: Basic salivary proline-rich protein 3 (351 aa).

The N-terminal stretch at 1–16 (MLLILLSVALLALSSA) is a signal peptide. Position 17 is a pyrrolidone carboxylic acid (Q17). Residues 17–351 (QSLNEDVSQE…HRPPQGQPPQ (335 aa)) are disordered. The segment covering 20–31 (NEDVSQEESPSV) has biased composition (polar residues). At S24 the chain carries Phosphoserine. Tandem repeats lie at residues 53–73 (PPGK…GPPP), 74–94 (RPGK…GPPP), 95–115 (RPGK…GPPP), 116–136 (RPGK…GPPP), 137–157 (RPGK…GPPP), 158–178 (RPGK…GPPP), 179–199 (HPGK…GPPP), 200–220 (RPGK…GPPP), 221–241 (RPGK…GPPP), 242–261 (RPGK…QGPP), 263–283 (RPGK…GPPP), and 284–304 (HPGK…RPPP). A 12 X 21 AA tandem repeats of [RHP]-P-G-K-P-[EQ]-G-[PQS]-P-[PS]-Q-[GE]-G-N-[QK]-[SP]-[QR]-[GR]-P-P-P region spans residues 53-304 (PPGKPEGRPP…EGNKPQRPPP (252 aa)). A glycan (N-linked (GlcNAc...) asparagine) is linked at N66. The span at 70–84 (GPPPRPGKPEGPPPQ) shows a compositional bias: pro residues. An N-linked (GlcNAc...) asparagine glycan is attached at N87. S89 is a glycosylation site (O-linked (Hex) serine). Residues 99-111 (PEGQPPQGGNQSQ) are compositionally biased toward low complexity. An N-linked (GlcNAc...) asparagine glycan is attached at N108. Residues 112–126 (GPPPRPGKPEGPPPQ) show a composition bias toward pro residues. N129 is a glycosylation site (N-linked (GlcNAc...) asparagine). Pro residues predominate over residues 133–147 (GPPPRPGKPEGPPPQ). N150 carries an N-linked (GlcNAc...) asparagine glycan. Composition is skewed to pro residues over residues 154–168 (GPPP…PPPQ) and 175–189 (GPPP…PPPQ). N-linked (GlcNAc...) asparagine glycosylation is present at N192. The segment covering 196-210 (GPPPRPGKPEGPPPQ) has biased composition (pro residues). Residues N213 and N234 are each glycosylated (N-linked (GlcNAc...) asparagine). Pro residues-rich tracts occupy residues 217–252 (GPPP…PPPQ), 259–270 (GPPPRPGKPEGP), and 279–351 (QGPP…QPPQ). An N-linked (Hex) asparagine; atypical glycan is attached at N297.

In terms of processing, N- and O-glycosylated; contains about 50% carbohydrate. This is composed of highly fucosylated N-linked saccharides, the major structure is a biantennary asialosaccharide containing 2 fucose residues on one antenna and an unsubstituted terminal lactosamine sequence on the other. The Gram-negative bacterium F.nucleatum binds to carbohydrates containing unsubstituted GalBeta1,4GlcNAc residues. N-glycosylation on Asn-87 is prevalent in head and neck cancer patients. Post-translationally, proteolytically cleaved at the tripeptide Xaa-Pro-Gln, where Xaa in the P(3) position is mostly lysine. The endoprotease may be of microbial origin. Besides on the N-terminal of mature PRB3, pyroglutamate formation found on at least Gln-67, Gln-88, Gln-256 and Gln-337.

It localises to the secreted. Acts as a receptor for the Gram-negative bacterium F.nucleatum. This chain is Basic salivary proline-rich protein 3 (PRB3), found in Homo sapiens (Human).